The primary structure comprises 1039 residues: Alpha-mannosidase 2C1 (1039 aa).

Co(2+) is bound by residues His259, Asp261, Asp371, and His576. Asp371 functions as the Nucleophile in the catalytic mechanism.

It belongs to the glycosyl hydrolase 38 family. It depends on Co(2+) as a cofactor. In terms of tissue distribution, expressed in kidney and liver (at protein level). Widely expressed, with highest levels in lung, ovary and testis. Also detected at lower levels in heart, brain, liver, spleen, kidney and thymus.

It localises to the cytoplasm. The enzyme catalyses Hydrolysis of terminal, non-reducing alpha-D-mannose residues in alpha-D-mannosides.. Inhibited by 1,4-dideoxy-1,4-imino-d-mannitol (DIM) and EDTA. Cleaves alpha 1,2-, alpha 1,3-, and alpha 1,6-linked mannose residues from glycoproteins. Involved in the degradation of free oligosaccharides in the cytoplasm. This is Alpha-mannosidase 2C1 from Mus musculus (Mouse).